The following is a 330-amino-acid chain: tRNA-modifying protein YgfZ (330 aa).

Residues tryptophan 28 and tryptophan 190 each contribute to the folate site.

Belongs to the tRNA-modifying YgfZ family.

Its subcellular location is the cytoplasm. Functionally, folate-binding protein involved in regulating the level of ATP-DnaA and in the modification of some tRNAs. It is probably a key factor in regulatory networks that act via tRNA modification, such as initiation of chromosomal replication. This is tRNA-modifying protein YgfZ from Yersinia pseudotuberculosis serotype IB (strain PB1/+).